Reading from the N-terminus, the 1034-residue chain is MLKGGMLSRWKMWSPQYKILRNHLINFKSVSTYKNISGVNTKQPKSPRQFGCMPHVTKKRKYKYEEGKTYHGFQCERVEHISEFELTSYTFRYERTGTELWHIDRNDSNNVFSINFRTTPFDSTGLPHILEHLSLCGSQKYPVRDPFFKMLNRSVATFMNAMTGPDYTIYPFSTMNEIDFRNLQHIYLDAVFRPNLAYFDFLQEGWRLENKDIFDKQSKLVIKGVVYNEMKGAFSENAQVFSQNLLNNIFPDHTYRHVSGGNPLEIPKLAYNDLVEFHKKYYHPSNARIYSYGLFDASKTLALLDEEYLSDQSWVDNSYSLIRQQERWTQPRLVHISSRLDNMGTTIDRQNQIAIALLMCDATNIQESFELHVLSEVLIRGPNSPFYKNLIEPNFSGGYNQTTGYSSDTKDTTFVVGLQDLRVEDFKKCIEIFDKTIINSMNDGFDSQHVESVLHNLELSLKHQNPNFGNTLLFNSTALWNHDGDVVSNLRVSDMISGLRESISQNKKYFQEKIEKYFANNNHRLTLTMSPDEAYEDKFKQAELELVEQKVKLLDEVKIEKIYERGLILDSYQKAESNTDLLPCLTMNDVRDPPKWPKLFIQNVQNVRTQICKVPTNEITYFKCMFNITGLSHEETQLMPLFCNVISAMGTTNYNYREFDKHILLKTGGFDFKLHLIEDVRDSKSYSLSVMINTHALNNNVPEMFALCQELIKNVRFDDSERLKMLIENYISYISVGVASSGHLYAMLGATSQVCDAGKLKSLLYGVDHIDFMKNFVHSTSTVDICDKLSTIASKVFNKDNMRGAINTTQSYEPSAISNYEKFLESLPTFGKTQTSRNIHYLDPSCQQYVMNIPVNYCAKALFTVPYLHQDHPTLRVLAKLLSAKYLLPVIREKNGAYGAGAKISSDGIFSFYSYRDPNSTKTLNAFDETYKWLRANQNVIDQQSLFESKLGVLQQLDTPIAPGNIGIDYFLYEVSQEDFESYRSRMLSVTIDDLQCAIENYFGKESMHYGKCILGPVNANLELETSHKWIINN.

The N-terminal 29 residues, 1 to 29 (MLKGGMLSRWKMWSPQYKILRNHLINFKS), are a transit peptide targeting the mitochondrion. Residue histidine 128 coordinates Zn(2+). Glutamate 131 acts as the Proton acceptor in catalysis. Positions 132 and 229 each coordinate Zn(2+).

Belongs to the peptidase M16 family. PreP subfamily. As to quaternary structure, homodimer. Zn(2+) is required as a cofactor.

The protein localises to the mitochondrion. ATP-independent protease that degrades mitochondrial transit peptides after their cleavage. Also degrades other unstructured peptides. This chain is Presequence protease, mitochondrial, found in Drosophila melanogaster (Fruit fly).